The primary structure comprises 140 residues: Cytochrome c-type biogenesis protein CcmE (140 aa).

The Cytoplasmic segment spans residues 1–7; sequence MKRKHKR. Residues 8-28 traverse the membrane as a helical; Signal-anchor for type II membrane protein segment; that stretch reads LLFVLASFCAAGCALLFILSE. The Periplasmic segment spans residues 29-140; it reads LRESVSFFYT…TIPKALPEPK (112 aa). 2 residues coordinate heme: H121 and Y125.

Belongs to the CcmE/CycJ family.

It localises to the cell inner membrane. Heme chaperone required for the biogenesis of c-type cytochromes. Transiently binds heme delivered by CcmC and transfers the heme to apo-cytochromes in a process facilitated by CcmF and CcmH. The sequence is that of Cytochrome c-type biogenesis protein CcmE from Anaplasma marginale (strain Florida).